Here is a 288-residue protein sequence, read N- to C-terminus: ATP synthase gamma chain (288 aa).

It belongs to the ATPase gamma chain family. As to quaternary structure, F-type ATPases have 2 components, CF(1) - the catalytic core - and CF(0) - the membrane proton channel. CF(1) has five subunits: alpha(3), beta(3), gamma(1), delta(1), epsilon(1). CF(0) has three main subunits: a, b and c.

The protein resides in the cell inner membrane. Functionally, produces ATP from ADP in the presence of a proton gradient across the membrane. The gamma chain is believed to be important in regulating ATPase activity and the flow of protons through the CF(0) complex. In Aliivibrio fischeri (strain ATCC 700601 / ES114) (Vibrio fischeri), this protein is ATP synthase gamma chain.